The sequence spans 48 residues: MDEKQRYDAGMQVRRAVLGDAHVDRCLEKLNDFNGEFQEMITRHACGD.

It belongs to the carboxymuconolactone decarboxylase family.

The enzyme catalyses (R)-2-(carboxymethyl)-5-oxo-2,5-dihydro-2-furoate + H(+) = (4,5-dihydro-5-oxofuran-2-yl)-acetate + CO2. It functions in the pathway aromatic compound metabolism; beta-ketoadipate pathway; 5-oxo-4,5-dihydro-2-furylacetate from 3-carboxy-cis,cis-muconate: step 2/2. In Pseudomonas putida (Arthrobacter siderocapsulatus), this protein is 4-carboxymuconolactone decarboxylase.